A 126-amino-acid chain; its full sequence is Hydrogenase maturation factor HypA (126 aa).

A Ni(2+)-binding site is contributed by histidine 2. 4 residues coordinate Zn(2+): cysteine 78, cysteine 81, cysteine 97, and cysteine 100.

It belongs to the HypA/HybF family.

Its function is as follows. Involved in the maturation of [NiFe] hydrogenases. Required for nickel insertion into the metal center of the hydrogenase. This Methanococcus maripaludis (strain C6 / ATCC BAA-1332) protein is Hydrogenase maturation factor HypA.